We begin with the raw amino-acid sequence, 1935 residues long: Myosin heavy chain, fast skeletal muscle (1935 aa).

The 50-residue stretch at 32–81 (DAKTAFFVVDPDEMYLKGTLVSKEGGKATVKTHSGKTVTVKEDEIFPMNP) folds into the Myosin N-terminal SH3-like domain. A Myosin motor domain is found at 85–779 (DKIEDMAMMT…LLGALEEMRD (695 aa)). An N6,N6,N6-trimethyllysine modification is found at Lys-129. 178 to 185 (GESGAGKT) contacts ATP. Actin-binding stretches follow at residues 659–681 (LMTNLRSTHPHFVRCLIPNESKT) and 761–775 (HTKVFFKAGLLGALE). Residues 782–811 (LALLVTMTQALCRGYVMRKEFVKMMERRES) enclose the IQ domain. The segment at 812 to 839 (IYSIQYNIRSFMNVKHWPWMKLYFKIKP) is hinge. Residues 840–1935 (LLKSAETEKE…RDAGKSKDEE (1096 aa)) adopt a coiled-coil conformation. Disordered stretches follow at residues 1589–1608 (RNSQRVIDSMQSTLDSEVRS) and 1902–1935 (HELEEAQERADVAESQVNKLRAKSRDAGKSKDEE). The segment covering 1592 to 1603 (QRVIDSMQSTLD) has biased composition (polar residues). Composition is skewed to basic and acidic residues over residues 1902–1913 (HELEEAQERADV) and 1924–1935 (KSRDAGKSKDEE).

It belongs to the TRAFAC class myosin-kinesin ATPase superfamily. Myosin family. As to quaternary structure, muscle myosin is a hexameric protein that consists of 2 heavy chain subunits (MHC), 2 alkali light chain subunits (MLC) and 2 regulatory light chain subunits (MLC-2).

Its subcellular location is the cytoplasm. It localises to the myofibril. Muscle contraction. This Cyprinus carpio (Common carp) protein is Myosin heavy chain, fast skeletal muscle.